Here is a 206-residue protein sequence, read N- to C-terminus: Uridine kinase (206 aa).

Gly9 to Thr16 is an ATP binding site.

It belongs to the uridine kinase family.

It localises to the cytoplasm. The catalysed reaction is uridine + ATP = UMP + ADP + H(+). It catalyses the reaction cytidine + ATP = CMP + ADP + H(+). It functions in the pathway pyrimidine metabolism; CTP biosynthesis via salvage pathway; CTP from cytidine: step 1/3. The protein operates within pyrimidine metabolism; UMP biosynthesis via salvage pathway; UMP from uridine: step 1/1. This is Uridine kinase from Borrelia garinii subsp. bavariensis (strain ATCC BAA-2496 / DSM 23469 / PBi) (Borreliella bavariensis).